Here is a 424-residue protein sequence, read N- to C-terminus: 3-ketoacyl-CoA thiolase B, peroxisomal (424 aa).

A peroxisome-targeting transit peptide spans 1–26; the sequence is MHRLQVVLGHLAGRSESSSALQAAPC. The PTS2-type peroxisomal targeting signal stretch occupies residues 1 to 26; it reads MHRLQVVLGHLAGRSESSSALQAAPC. The Acyl-thioester intermediate role is filled by C123. N6-acetyllysine is present on residues K173 and K234. CoA is bound by residues R249, T252, and S276. C408 functions as the Proton donor/acceptor in the catalytic mechanism.

It belongs to the thiolase-like superfamily. Thiolase family. As to quaternary structure, homodimer. Interacts (via PTS2-type peroxisomal targeting signal region) with PEX7; leading to its translocation into peroxisomes.

It is found in the peroxisome. The catalysed reaction is an acyl-CoA + acetyl-CoA = a 3-oxoacyl-CoA + CoA. It catalyses the reaction 2 acetyl-CoA = acetoacetyl-CoA + CoA. It carries out the reaction hexanoyl-CoA + acetyl-CoA = 3-oxooctanoyl-CoA + CoA. The enzyme catalyses tetradecanoyl-CoA + acetyl-CoA = 3-oxohexadecanoyl-CoA + CoA. The catalysed reaction is 3-oxohexadecanedioyl-CoA + CoA = tetradecanedioyl-CoA + acetyl-CoA. It catalyses the reaction 3-oxo-(6Z,9Z,12Z,15Z,18Z,21Z)-tetracosahexaenoyl-CoA + CoA = (4Z,7Z,10Z,13Z,16Z,19Z)-docosahexaenoyl-CoA + acetyl-CoA. Its pathway is lipid metabolism; peroxisomal fatty acid beta-oxidation. In terms of biological role, responsible for the thiolytic cleavage of straight chain 3-keto fatty acyl-CoAs (3-oxoacyl-CoAs). Plays an important role in fatty acid peroxisomal beta-oxidation. Catalyzes the cleavage of short, medium, long, and very long straight chain 3-oxoacyl-CoAs. Medium chain straight 3-oxoacyl-CoAs are preferred substrates. This chain is 3-ketoacyl-CoA thiolase B, peroxisomal, found in Rattus norvegicus (Rat).